Reading from the N-terminus, the 279-residue chain is NAD kinase (279 aa).

The active-site Proton acceptor is D61. NAD(+) contacts are provided by residues 61-62 (DG), 138-139 (ND), K149, K166, D168, and 179-184 (TGYSFS).

Belongs to the NAD kinase family. A divalent metal cation serves as cofactor.

Its subcellular location is the cytoplasm. It catalyses the reaction NAD(+) + ATP = ADP + NADP(+) + H(+). In terms of biological role, involved in the regulation of the intracellular balance of NAD and NADP, and is a key enzyme in the biosynthesis of NADP. Catalyzes specifically the phosphorylation on 2'-hydroxyl of the adenosine moiety of NAD to yield NADP. In Borreliella burgdorferi (strain ATCC 35210 / DSM 4680 / CIP 102532 / B31) (Borrelia burgdorferi), this protein is NAD kinase.